Consider the following 282-residue polypeptide: D-alanine aminotransferase (282 aa).

Tyr32 is a substrate binding site. Pyridoxal 5'-phosphate is bound at residue Arg51. Arg99 and His101 together coordinate substrate. Lys146 functions as the Proton acceptor in the catalytic mechanism. Lys146 carries the post-translational modification N6-(pyridoxal phosphate)lysine. Glu178 contacts pyridoxal 5'-phosphate.

This sequence belongs to the class-IV pyridoxal-phosphate-dependent aminotransferase family. Homodimer. It depends on pyridoxal 5'-phosphate as a cofactor.

The catalysed reaction is D-alanine + 2-oxoglutarate = D-glutamate + pyruvate. In terms of biological role, acts on the D-isomers of alanine, leucine, aspartate, glutamate, aminobutyrate, norvaline and asparagine. The enzyme transfers an amino group from a substrate D-amino acid to the pyridoxal phosphate cofactor to form pyridoxamine and an alpha-keto acid in the first half-reaction. The second half-reaction is the reverse of the first, transferring the amino group from the pyridoxamine to a second alpha-keto acid to form the product D-amino acid via a ping-pong mechanism. This is an important process in the formation of D-alanine and D-glutamate, which are essential bacterial cell wall components. The polypeptide is D-alanine aminotransferase (dat) (Staphylococcus epidermidis (strain ATCC 35984 / DSM 28319 / BCRC 17069 / CCUG 31568 / BM 3577 / RP62A)).